The chain runs to 419 residues: G protein-activated inward rectifier potassium channel 4 (419 aa).

The Cytoplasmic portion of the chain corresponds to 1–86 (MAGDSRNAMN…LFTTLVDLKW (86 aa)). Residue Ser5 is modified to Phosphoserine. A helical transmembrane segment spans residues 87–111 (RFNLLVFTMVYTVTWLFFGFIWWLI). Over 112–135 (AYIRGDLDHVGDQEWIPCVENLSG) the chain is Extracellular. The segment at residues 136–147 (FVSAFLFSIETE) is an intramembrane region (helical; Pore-forming). Positions 148-154 (TTIGYGF) form an intramembrane region, pore-forming. The Selectivity filter motif lies at 149-154 (TIGYGF). The Extracellular segment spans residues 155–163 (RVITEKCPE). Residues 164–185 (GIILLLVQAILGSIVNAFMVGC) traverse the membrane as a helical segment. Residues 186–419 (MFVKISQPKK…GGSREARGSV (234 aa)) lie on the Cytoplasmic side of the membrane. A disordered region spans residues 390–419 (AEAGLDAEAEQNEEDEPKGLGGSREARGSV). Residues 394–405 (LDAEAEQNEEDE) show a composition bias toward acidic residues.

It belongs to the inward rectifier-type potassium channel (TC 1.A.2.1) family. KCNJ5 subfamily. Associates with KCNJ3/GIRK1 to form a G-protein-activated heteromultimer pore-forming unit. The resulting inward current is much larger. Associates with KCNJ6/GIRK2 to form a G-protein-activated heteromultimer pore-forming unit. As to expression, islets, exocrine pancreas and heart. Expressed in the adrenal cortex, particularly the zona glomerulosa.

Its subcellular location is the membrane. The enzyme catalyses K(+)(in) = K(+)(out). With respect to regulation, heteromultimer composed of KCNJ3/GIRK1 and KCNJ5/GIRK4 is activated by phosphatidylinositol 4,5 biphosphate (PtdIns(4,5)P2). Functionally, inward rectifier potassium channels are characterized by a greater tendency to allow potassium to flow into the cell rather than out of it. Their voltage dependence is regulated by the concentration of extracellular potassium; as external potassium is raised, the voltage range of the channel opening shifts to more positive voltages. The inward rectification is mainly due to the blockage of outward current by internal magnesium. Can be blocked by external barium. This potassium channel is controlled by G proteins. This Homo sapiens (Human) protein is G protein-activated inward rectifier potassium channel 4 (KCNJ5).